The primary structure comprises 210 residues: Large ribosomal subunit protein uL3 (210 aa).

Gln151 bears the N5-methylglutamine mark.

This sequence belongs to the universal ribosomal protein uL3 family. Part of the 50S ribosomal subunit. Forms a cluster with proteins L14 and L19. Post-translationally, methylated by PrmB.

Functionally, one of the primary rRNA binding proteins, it binds directly near the 3'-end of the 23S rRNA, where it nucleates assembly of the 50S subunit. In Aeromonas hydrophila subsp. hydrophila (strain ATCC 7966 / DSM 30187 / BCRC 13018 / CCUG 14551 / JCM 1027 / KCTC 2358 / NCIMB 9240 / NCTC 8049), this protein is Large ribosomal subunit protein uL3.